Here is a 530-residue protein sequence, read N- to C-terminus: Phosphoenolpyruvate carboxykinase (ATP) (530 aa).

3 residues coordinate substrate: R58, Y195, and K201. ATP is bound by residues K201, H220, and 236-244 (GLSGTGKTT). Mn(2+)-binding residues include K201 and H220. D257 provides a ligand contact to Mn(2+). ATP is bound by residues E285, R321, 440-441 (RI), and T446. Substrate is bound at residue R321.

Belongs to the phosphoenolpyruvate carboxykinase (ATP) family. It depends on Mn(2+) as a cofactor.

It is found in the cytoplasm. It catalyses the reaction oxaloacetate + ATP = phosphoenolpyruvate + ADP + CO2. The protein operates within carbohydrate biosynthesis; gluconeogenesis. Functionally, involved in the gluconeogenesis. Catalyzes the conversion of oxaloacetate (OAA) to phosphoenolpyruvate (PEP) through direct phosphoryl transfer between the nucleoside triphosphate and OAA. The polypeptide is Phosphoenolpyruvate carboxykinase (ATP) (Staphylococcus epidermidis (strain ATCC 12228 / FDA PCI 1200)).